Consider the following 170-residue polypeptide: Adenine phosphoribosyltransferase (170 aa).

Belongs to the purine/pyrimidine phosphoribosyltransferase family. As to quaternary structure, homodimer.

It localises to the cytoplasm. The catalysed reaction is AMP + diphosphate = 5-phospho-alpha-D-ribose 1-diphosphate + adenine. It participates in purine metabolism; AMP biosynthesis via salvage pathway; AMP from adenine: step 1/1. Functionally, catalyzes a salvage reaction resulting in the formation of AMP, that is energically less costly than de novo synthesis. This is Adenine phosphoribosyltransferase from Prochlorococcus marinus (strain MIT 9312).